Here is a 154-residue protein sequence, read N- to C-terminus: Lipoprotein signal peptidase (154 aa).

4 helical membrane-spanning segments follow: residues 8 to 28 (AFFL…YWAL), 36 to 56 (IVVN…AFSF), 66 to 86 (WLFA…LLTK), and 88 to 108 (HHWL…GNLY). Catalysis depends on residues Asp-118 and Asp-136. Residues 129-149 (WPVFNLADVAITLGVILMLIA) form a helical membrane-spanning segment.

The protein belongs to the peptidase A8 family.

The protein resides in the cell inner membrane. The catalysed reaction is Release of signal peptides from bacterial membrane prolipoproteins. Hydrolyzes -Xaa-Yaa-Zaa-|-(S,diacylglyceryl)Cys-, in which Xaa is hydrophobic (preferably Leu), and Yaa (Ala or Ser) and Zaa (Gly or Ala) have small, neutral side chains.. It participates in protein modification; lipoprotein biosynthesis (signal peptide cleavage). Its function is as follows. This protein specifically catalyzes the removal of signal peptides from prolipoproteins. The polypeptide is Lipoprotein signal peptidase (Dichelobacter nodosus (strain VCS1703A)).